The sequence spans 231 residues: Lipoprotein-releasing system ATP-binding protein LolD (231 aa).

The ABC transporter domain occupies 6–230; the sequence is LSCKNVSKKY…DGELELVINS (225 aa). 42–49 is a binding site for ATP; sequence GLSGSGKT.

It belongs to the ABC transporter superfamily. Lipoprotein translocase (TC 3.A.1.125) family. In terms of assembly, the complex is composed of two ATP-binding proteins (LolD) and two transmembrane proteins (LolC and LolE).

Its subcellular location is the cell inner membrane. In terms of biological role, part of the ABC transporter complex LolCDE involved in the translocation of mature outer membrane-directed lipoproteins, from the inner membrane to the periplasmic chaperone, LolA. Responsible for the formation of the LolA-lipoprotein complex in an ATP-dependent manner. The polypeptide is Lipoprotein-releasing system ATP-binding protein LolD (Francisella tularensis subsp. tularensis (strain FSC 198)).